The primary structure comprises 356 residues: Histidinol-phosphate aminotransferase 1 (356 aa).

Lys-217 is modified (N6-(pyridoxal phosphate)lysine).

This sequence belongs to the class-II pyridoxal-phosphate-dependent aminotransferase family. Histidinol-phosphate aminotransferase subfamily. As to quaternary structure, homodimer. Pyridoxal 5'-phosphate serves as cofactor.

The enzyme catalyses L-histidinol phosphate + 2-oxoglutarate = 3-(imidazol-4-yl)-2-oxopropyl phosphate + L-glutamate. The protein operates within amino-acid biosynthesis; L-histidine biosynthesis; L-histidine from 5-phospho-alpha-D-ribose 1-diphosphate: step 7/9. The protein is Histidinol-phosphate aminotransferase 1 of Burkholderia mallei (strain ATCC 23344).